The following is a 136-amino-acid chain: C-type natriuretic peptide prohormone (136 aa).

A signal peptide spans 1–21 (MSGQTSFYCGLLLVLLIQAQA). Residues C120 and C136 are joined by a disulfide bond.

It belongs to the natriuretic peptide family. As to expression, CNP-115 is differentially processed to produce CNP-38 and CNP-39 in the heart and CNP-22 in the brain.

It is found in the secreted. Its function is as follows. Hormone which may be vasoactive and natriuretic. Has a cGMP-stimulating activity. The chain is C-type natriuretic peptide prohormone from Triakis scyllium (Banded houndshark).